A 1238-amino-acid polypeptide reads, in one-letter code: MAEPRMPRPAISPTRDKSHSPYRESPSRRLRDVETGYNPPQNPPYPPQRNGTEPYPPSPSSRTADWEPIMSNPNPMSQSDLGRKKSLIRPERNRIDRDHPNYYYRKHAANMEVLPSTTGNDPVVEDLAEHRTVSSGSTQQDTSIEEEVVGNPQKSRMPGKLEPVGKKKAPRKLVRKDTRNLTEEEKRRQKELDKIKPPSIWNIYCAVVTFWAPDCLLQCFGMPARAQRRAWKEKVGLISIILLIAAFVGFLTFGFTQAVCAAPGLRLKINHVDRSYMIFHGGAYNLDGSMHPAARGIPLDANVLYDLPHKYGGQDGSFMFQKVNGACKGLITLAEGSDVPTNSDGDLAWYFPCTAFNQDGSSEVNLTSPYYLGYACHTTAKARNTFYSLKKAGDVYFTWDDIKNKSRNLAVYSGSVVDLDLLKWFNKSQVAWPQQFDDLRENGRVRGMDLTHVLQSATDKQVGRCLTQIAKVGSIDTESVGCIASKVVLYVSLVFILAIVAAKFFLALAFQWFLARRFAAAKTSQTSDPKKRAKQIEDWTDDIYKPAPKITDPASTVTGSDGRTSKRGSMFLPQTSRFTSPYAVDRRSSRPPPTTMTSQSSNAKLLPGGNPYKSGFNSSQNTLDLHSRMSVGASRSSLLLSGQETRYSAVMDNLDPNGPVGFIHENVVPQPPPEWQPFGYPLAHVICLVTAYSEGEDGIRTTLDSIATTDYPNSHKAILVVCDGMIKGKGEAQSTPDIVLGMMGDFVIAPEDVQAFSYVAVSSGAKRHNMAKVYAGFYDYGPKSRIDPTKQQRVPMMVVVKCGTPDEATKSKPGNRGKRDSQIILMSFLQKVMFDERMTELEYEMFNGLWKVTGMSPDFYEMVLMVDADTKVFPDSLTHMVSAMVKDPEIMGLCGETKIANKNASWVSRIQVFEYFISHHLSKSFESVFGGVTCLPGCFCMYRIKSPKGGQNYWVPILANPDIVEHYSENVVDTLHKKNLLLLGEDRYLSTLMLKTFPKRKQVFVPQAVCKTTVPDEFKVLLSQRRRWINSTVHNLMELVLVRDLCGTFCFSMQFVVFIELIGTLVLPAAISFTFYLIILSIVKKPVPVIPLVLLALILGLPAILIVLTAHRWSYILWMGIYLLSLPIWNFVLPAYAFWKFDDFSWGETRKTAGEKTKKAGLEYEGEFDSSKITMKRWGDFERGKLDQRSSVCGILVETNLCHLFRTASSGERKCLEPATSYASTERLRFYAWVRTLP.

2 disordered regions span residues 1 to 93 (MAEP…PERN) and 132 to 190 (TVSS…RRQK). Basic and acidic residues predominate over residues 14 to 34 (TRDKSHSPYRESPSRRLRDVE). N50 is a glycosylation site (N-linked (GlcNAc...) asparagine). Composition is skewed to polar residues over residues 71–80 (SNPNPMSQSD) and 133–142 (VSSGSTQQDT). The span at 175–190 (RKDTRNLTEEEKRRQK) shows a compositional bias: basic and acidic residues. N180 carries N-linked (GlcNAc...) asparagine glycosylation. Transmembrane regions (helical) follow at residues 200-220 (IWNI…LQCF) and 235-255 (VGLI…TFGF). Residues N365, N404, and N426 are each glycosylated (N-linked (GlcNAc...) asparagine). Residues 487-507 (VVLYVSLVFILAIVAAKFFLA) form a helical membrane-spanning segment. Disordered regions lie at residues 548 to 570 (PKIT…RGSM) and 582 to 606 (YAVD…AKLL). Residues 553 to 562 (PASTVTGSDG) show a composition bias toward polar residues. N617, N903, and N1030 each carry an N-linked (GlcNAc...) asparagine glycan. Helical transmembrane passes span 1062-1082 (IGTL…ILSI), 1087-1107 (VPVI…ILIV), and 1115-1135 (YILW…VLPA).

This sequence belongs to the chitin synthase family. Class IV subfamily. Maximal activity requires trypsin activation, suggesting a zymogenic nature.

The protein resides in the cell membrane. It carries out the reaction [(1-&gt;4)-N-acetyl-beta-D-glucosaminyl](n) + UDP-N-acetyl-alpha-D-glucosamine = [(1-&gt;4)-N-acetyl-beta-D-glucosaminyl](n+1) + UDP + H(+). Activity is stimulated by Mg(2+), and is more inhibited by polyoxin D than by nikkomycin. Polymerizes chitin, a structural polymer of the cell wall and septum, by transferring the sugar moiety of UDP-GlcNAc to the non-reducing end of the growing chitin polymer. CHS4 synthesizes a large amount of chitin and appears to play a role in the process of cell separation. CHS4 is particularly well suited for functioning at the higher temperatures associated with its poorly characterized saprophic environment and with human infection. The polypeptide is Chitin synthase 4 (Exophiala dermatitidis (Black yeast-like fungus)).